We begin with the raw amino-acid sequence, 250 residues long: 3-deoxy-manno-octulosonate cytidylyltransferase (250 aa).

Belongs to the KdsB family.

It localises to the cytoplasm. It catalyses the reaction 3-deoxy-alpha-D-manno-oct-2-ulosonate + CTP = CMP-3-deoxy-beta-D-manno-octulosonate + diphosphate. It participates in nucleotide-sugar biosynthesis; CMP-3-deoxy-D-manno-octulosonate biosynthesis; CMP-3-deoxy-D-manno-octulosonate from 3-deoxy-D-manno-octulosonate and CTP: step 1/1. It functions in the pathway bacterial outer membrane biogenesis; lipopolysaccharide biosynthesis. Activates KDO (a required 8-carbon sugar) for incorporation into bacterial lipopolysaccharide in Gram-negative bacteria. The chain is 3-deoxy-manno-octulosonate cytidylyltransferase from Syntrophobacter fumaroxidans (strain DSM 10017 / MPOB).